The following is a 455-amino-acid chain: GTPase Der (455 aa).

2 consecutive EngA-type G domains span residues 4-169 (PIVA…PPKH) and 178-353 (IQMA…EQHR). GTP-binding positions include 10-17 (GRPNVGKS), 57-61 (DTGGL), 120-123 (NKCE), 184-191 (GRPNVGKS), 231-235 (DTAGI), and 296-299 (NKWD). The 86-residue stretch at 354 to 439 (RRVSTSVVNE…PLKLFWRGKQ (86 aa)) folds into the KH-like domain.

Belongs to the TRAFAC class TrmE-Era-EngA-EngB-Septin-like GTPase superfamily. EngA (Der) GTPase family. Associates with the 50S ribosomal subunit.

In terms of biological role, GTPase that plays an essential role in the late steps of ribosome biogenesis. The chain is GTPase Der from Prochlorococcus marinus (strain MIT 9313).